A 283-amino-acid chain; its full sequence is Beta-glucoside operon antiterminator (283 aa).

PRD domains lie at 65–170 (RIPL…SHMP) and 171–280 (EVMR…LQEQ).

This sequence belongs to the transcriptional antiterminator BglG family. Post-translationally, phosphorylated and inactivated by ArbF (EII-Bgl). The degree of phosphorylation is dependent on the presence or absence of beta-glucosides which act as inducers of the operon expression. Addition of inducer result in the rapid dephosphorylation of ArbG.

Mediates the positive regulation of the beta-glucoside (arb) operon by functioning as a transcriptional antiterminator. This is an RNA-binding protein that recognizes a specific sequence located just upstream of two termination sites within the operon. The chain is Beta-glucoside operon antiterminator (arbG) from Dickeya chrysanthemi (Pectobacterium chrysanthemi).